The following is a 364-amino-acid chain: Peroxidase (364 aa).

Positions 1–20 (MKLSLFSTFAAVIIGALALP) are cleaved as a signal peptide. The residue at position 21 (Gln-21) is a Pyrrolidone carboxylic acid. 4 disulfides stabilise this stretch: Cys-32–Cys-44, Cys-43–Cys-313, Cys-63–Cys-149, and Cys-277–Cys-342. His-76 serves as the catalytic Proton acceptor. Asp-77, Gly-95, Asp-97, and Ser-99 together coordinate Ca(2+). Residue Asn-163 is glycosylated (N-linked (GlcNAc...) (high mannose) asparagine). Residue His-204 participates in heme b binding. Ca(2+) is bound by residues Ser-205, Asp-222, Thr-224, Val-227, and Asp-229.

Belongs to the peroxidase family. Ligninase subfamily. It depends on Ca(2+) as a cofactor. Heme b serves as cofactor.

The protein resides in the secreted. The catalysed reaction is 2 a phenolic donor + H2O2 = 2 a phenolic radical donor + 2 H2O. This Arthromyces ramosus protein is Peroxidase.